Reading from the N-terminus, the 413-residue chain is PCI domain-containing protein 2 homolog (413 aa).

The PCI domain maps to 222-403 (VAYNYFLGRK…QKLVISKMNA (182 aa)).

Belongs to the CSN12 family.

In Caenorhabditis elegans, this protein is PCI domain-containing protein 2 homolog.